The chain runs to 705 residues: Polyribonucleotide nucleotidyltransferase (705 aa).

Mg(2+) is bound by residues aspartate 486 and aspartate 492. The KH domain maps to proline 553 to isoleucine 612. The S1 motif domain maps to glycine 622–lysine 690.

Belongs to the polyribonucleotide nucleotidyltransferase family. Component of the RNA degradosome, which is a multiprotein complex involved in RNA processing and mRNA degradation. Mg(2+) is required as a cofactor.

It is found in the cytoplasm. The enzyme catalyses RNA(n+1) + phosphate = RNA(n) + a ribonucleoside 5'-diphosphate. In terms of biological role, involved in mRNA degradation. Catalyzes the phosphorolysis of single-stranded polyribonucleotides processively in the 3'- to 5'-direction. In Colwellia psychrerythraea (strain 34H / ATCC BAA-681) (Vibrio psychroerythus), this protein is Polyribonucleotide nucleotidyltransferase.